We begin with the raw amino-acid sequence, 628 residues long: tRNA uridine 5-carboxymethylaminomethyl modification enzyme MnmG (628 aa).

Residues 14–19 (GAGHAG), valine 126, and serine 181 contribute to the FAD site. Residue 273–287 (GPRYCPSIEDKVVRF) participates in NAD(+) binding. FAD is bound at residue glutamine 370.

This sequence belongs to the MnmG family. As to quaternary structure, homodimer. Heterotetramer of two MnmE and two MnmG subunits. The cofactor is FAD.

It is found in the cytoplasm. In terms of biological role, NAD-binding protein involved in the addition of a carboxymethylaminomethyl (cmnm) group at the wobble position (U34) of certain tRNAs, forming tRNA-cmnm(5)s(2)U34. The polypeptide is tRNA uridine 5-carboxymethylaminomethyl modification enzyme MnmG (Pelobacter propionicus (strain DSM 2379 / NBRC 103807 / OttBd1)).